The following is a 429-amino-acid chain: TNF receptor-associated factor family protein DDB_G0267744 (429 aa).

An RING-type; degenerate zinc finger spans residues 22–60 (CVICSHLQVDIYQCVEGHFACKNCFLKMIELKKQCMTCR). TRAF-type zinc fingers lie at residues 151 to 203 (HHLK…GEFN) and 204 to 265 (NHQD…SNSE).

This sequence belongs to the TNF receptor-associated factor family.

It is found in the cytoplasm. Probable adapter protein and signal transducer that links members of the tumor necrosis factor receptor family to different signaling pathways by association with the receptor cytoplasmic domain and kinases. The polypeptide is TNF receptor-associated factor family protein DDB_G0267744 (Dictyostelium discoideum (Social amoeba)).